The sequence spans 199 residues: ParB-like protein Saci_1498 (199 aa).

It belongs to the ParB family.

In terms of biological role, probably part of a 4-gene DNA damage response locus in which the upstream ups system, in combination with this downstream locus, functions in homologous recombination to rescue Sulfolobales from DNA-damaging threats. This protein might function in the DNA transfer machinery. The chain is ParB-like protein Saci_1498 from Sulfolobus acidocaldarius (strain ATCC 33909 / DSM 639 / JCM 8929 / NBRC 15157 / NCIMB 11770).